A 478-amino-acid chain; its full sequence is Kynurenine 3-monooxygenase (478 aa).

FAD contacts are provided by residues Val-19, Tyr-37–Arg-40, and Ala-57. Positions 85 and 99 each coordinate L-kynurenine. Residues Arg-111, Leu-136, Thr-172, Asp-304, and Met-317–Asn-318 contribute to the FAD site. L-kynurenine contacts are provided by Asn-363 and Tyr-398. Helical transmembrane passes span Phe-385–Thr-404 and Gly-425–Leu-445.

This sequence belongs to the aromatic-ring hydroxylase family. KMO subfamily. Requires FAD as cofactor. In terms of tissue distribution, highest activity in liver and kidney. Low activity in spleen, stomach, intestinal tract, esophagus, heart and lung.

It localises to the mitochondrion outer membrane. The catalysed reaction is L-kynurenine + NADPH + O2 + H(+) = 3-hydroxy-L-kynurenine + NADP(+) + H2O. Its pathway is cofactor biosynthesis; NAD(+) biosynthesis; quinolinate from L-kynurenine: step 1/3. In terms of biological role, catalyzes the hydroxylation of L-kynurenine (L-Kyn) to form 3-hydroxy-L-kynurenine (L-3OHKyn). Required for synthesis of quinolinic acid, a neurotoxic NMDA receptor antagonist and potential endogenous inhibitor of NMDA receptor signaling in axonal targeting, synaptogenesis and apoptosis during brain development. Quinolinic acid may also affect NMDA receptor signaling in pancreatic beta cells, osteoblasts, myocardial cells, and the gastrointestinal tract. This is Kynurenine 3-monooxygenase from Rattus norvegicus (Rat).